The following is a 156-amino-acid chain: Ribosome maturation factor RimP (156 aa).

Belongs to the RimP family.

The protein localises to the cytoplasm. Required for maturation of 30S ribosomal subunits. The polypeptide is Ribosome maturation factor RimP (Prochlorococcus marinus (strain NATL1A)).